The primary structure comprises 84 residues: Kappa-conotoxin-like Im11.3 (84 aa).

Positions 1-26 (MMFRLTSVSCFLLVIACLNLFQVVLT) are cleaved as a signal peptide. Disulfide bonds link Cys29–Cys43, Cys36–Cys48, Cys42–Cys51, and Cys47–Cys64. The propeptide occupies 71–84 (LRPSHPLFLLLPAR).

The protein belongs to the conotoxin I2 superfamily. As to expression, expressed by the venom duct.

Its subcellular location is the secreted. Functionally, inhibits the vertebrate voltage-gated potassium channels Kv1.1/KCNA1 and Kv1.3/KCNA3. The chain is Kappa-conotoxin-like Im11.3 from Conus imperialis (Imperial cone).